Reading from the N-terminus, the 530-residue chain is GMP synthase [glutamine-hydrolyzing] (530 aa).

The region spanning 4 to 205 (RILILDYGSQ…VKDICGCEGD (202 aa)) is the Glutamine amidotransferase type-1 domain. Cys84 (nucleophile) is an active-site residue. Catalysis depends on residues His179 and Glu181. The GMPS ATP-PPase domain maps to 206-398 (WNMPDYISEA…LGLPPQMVYR (193 aa)). 233 to 239 (SGGVDSL) is an ATP binding site.

In terms of assembly, homodimer.

The catalysed reaction is XMP + L-glutamine + ATP + H2O = GMP + L-glutamate + AMP + diphosphate + 2 H(+). It participates in purine metabolism; GMP biosynthesis; GMP from XMP (L-Gln route): step 1/1. Its function is as follows. Catalyzes the synthesis of GMP from XMP. The polypeptide is GMP synthase [glutamine-hydrolyzing] (Bordetella parapertussis (strain 12822 / ATCC BAA-587 / NCTC 13253)).